The following is a 494-amino-acid chain: Transcriptional regulator of yeast form adherence 3 (494 aa).

The 360-residue stretch at 1 to 360 (MKFAKTLERT…SLGIQKTFPK (360 aa)) folds into the SPX domain. An RING-type zinc finger spans residues 398-437 (CPICMNIAYKPIRLSCGHLFCVRCLVKMKQDDKTSCPLCR).

The protein resides in the nucleus. Functionally, transcription factor required for yeast cell adherence to silicone substrate. The sequence is that of Transcriptional regulator of yeast form adherence 3 (TRY3) from Candida albicans (strain SC5314 / ATCC MYA-2876) (Yeast).